Reading from the N-terminus, the 78-residue chain is Putative defensin-like protein 133 (78 aa).

The N-terminal stretch at 1 to 24 is a signal peptide; sequence MKRSFLLLLTILTIFIILGQGVMG. Disulfide bonds link Cys34/Cys75, Cys44/Cys68, Cys49/Cys72, and Cys53/Cys74.

The protein belongs to the DEFL family.

Its subcellular location is the secreted. This is Putative defensin-like protein 133 (LCR33) from Arabidopsis thaliana (Mouse-ear cress).